Reading from the N-terminus, the 304-residue chain is Putative S-adenosyl-L-methionine-dependent methyltransferase Mmcs_1043 (304 aa).

Residues aspartate 130 and 159 to 160 (DL) each bind S-adenosyl-L-methionine.

It belongs to the UPF0677 family.

In terms of biological role, exhibits S-adenosyl-L-methionine-dependent methyltransferase activity. The sequence is that of Putative S-adenosyl-L-methionine-dependent methyltransferase Mmcs_1043 from Mycobacterium sp. (strain MCS).